The chain runs to 292 residues: Formamidopyrimidine-DNA glycosylase (292 aa).

The active-site Schiff-base intermediate with DNA is the P2. E3 functions as the Proton donor in the catalytic mechanism. Catalysis depends on K61, which acts as the Proton donor; for beta-elimination activity. DNA-binding residues include H103, R122, and K168. An FPG-type zinc finger spans residues 254 to 288 (DAYGREGEHCRRCGAVMRREKFMNRSSFYCPRCQP). The Proton donor; for delta-elimination activity role is filled by R278.

The protein belongs to the FPG family. In terms of assembly, monomer. Zn(2+) is required as a cofactor.

It catalyses the reaction Hydrolysis of DNA containing ring-opened 7-methylguanine residues, releasing 2,6-diamino-4-hydroxy-5-(N-methyl)formamidopyrimidine.. The enzyme catalyses 2'-deoxyribonucleotide-(2'-deoxyribose 5'-phosphate)-2'-deoxyribonucleotide-DNA = a 3'-end 2'-deoxyribonucleotide-(2,3-dehydro-2,3-deoxyribose 5'-phosphate)-DNA + a 5'-end 5'-phospho-2'-deoxyribonucleoside-DNA + H(+). Involved in base excision repair of DNA damaged by oxidation or by mutagenic agents. Acts as a DNA glycosylase that recognizes and removes damaged bases. Has a preference for oxidized purines, such as 7,8-dihydro-8-oxoguanine (8-oxoG). Has AP (apurinic/apyrimidinic) lyase activity and introduces nicks in the DNA strand. Cleaves the DNA backbone by beta-delta elimination to generate a single-strand break at the site of the removed base with both 3'- and 5'-phosphates. The sequence is that of Formamidopyrimidine-DNA glycosylase from Mycobacterium ulcerans (strain Agy99).